Reading from the N-terminus, the 285-residue chain is Ribosomal protein L11 methyltransferase (285 aa).

Residues Thr131, Gly154, Asp176, and Asn223 each coordinate S-adenosyl-L-methionine.

The protein belongs to the methyltransferase superfamily. PrmA family.

It localises to the cytoplasm. It carries out the reaction L-lysyl-[protein] + 3 S-adenosyl-L-methionine = N(6),N(6),N(6)-trimethyl-L-lysyl-[protein] + 3 S-adenosyl-L-homocysteine + 3 H(+). In terms of biological role, methylates ribosomal protein L11. In Brucella abortus (strain S19), this protein is Ribosomal protein L11 methyltransferase.